We begin with the raw amino-acid sequence, 232 residues long: MSIVNSVRAQIPPIHREGYPFVGGFALVTLILFWIWSPLGWIGTVLTIWCAYFFRNPARTTPVRDGLVVSPADGRVSMVVDIIPPPELGLGAKPLPRVSIFMSVFNCHVNRSPVAGRIERIVYSPGKFINAELDKASEDNERNSMVLSTEHGQIGVIQIAGLIARRIVSFVREGQPLVAGERFGLIRFGSRLDVYLPEGTKPLVAEGQTAIAGETILADLKGGDAGRIYRTD.

The Schiff-base intermediate with substrate; via pyruvic acid role is filled by Ser190. Pyruvic acid (Ser); by autocatalysis is present on Ser190.

It belongs to the phosphatidylserine decarboxylase family. PSD-A subfamily. Heterodimer of a large membrane-associated beta subunit and a small pyruvoyl-containing alpha subunit. Requires pyruvate as cofactor. Post-translationally, is synthesized initially as an inactive proenzyme. Formation of the active enzyme involves a self-maturation process in which the active site pyruvoyl group is generated from an internal serine residue via an autocatalytic post-translational modification. Two non-identical subunits are generated from the proenzyme in this reaction, and the pyruvate is formed at the N-terminus of the alpha chain, which is derived from the carboxyl end of the proenzyme. The post-translation cleavage follows an unusual pathway, termed non-hydrolytic serinolysis, in which the side chain hydroxyl group of the serine supplies its oxygen atom to form the C-terminus of the beta chain, while the remainder of the serine residue undergoes an oxidative deamination to produce ammonia and the pyruvoyl prosthetic group on the alpha chain.

Its subcellular location is the cell membrane. The catalysed reaction is a 1,2-diacyl-sn-glycero-3-phospho-L-serine + H(+) = a 1,2-diacyl-sn-glycero-3-phosphoethanolamine + CO2. It participates in phospholipid metabolism; phosphatidylethanolamine biosynthesis; phosphatidylethanolamine from CDP-diacylglycerol: step 2/2. Catalyzes the formation of phosphatidylethanolamine (PtdEtn) from phosphatidylserine (PtdSer). This chain is Phosphatidylserine decarboxylase proenzyme, found in Rhodopseudomonas palustris (strain TIE-1).